The following is a 240-amino-acid chain: UDP-2,3-diacylglucosamine hydrolase (240 aa).

Residues Asp-9, His-11, Asp-43, Asn-81, and His-116 each coordinate Mn(2+). A substrate-binding site is contributed by 81–82 (NR). Substrate is bound by residues Asp-124, Ser-162, Lys-166, Lys-169, and His-197. Residues His-197 and His-199 each contribute to the Mn(2+) site.

The protein belongs to the LpxH family. The cofactor is Mn(2+).

The protein resides in the cell inner membrane. The enzyme catalyses UDP-2-N,3-O-bis[(3R)-3-hydroxytetradecanoyl]-alpha-D-glucosamine + H2O = 2-N,3-O-bis[(3R)-3-hydroxytetradecanoyl]-alpha-D-glucosaminyl 1-phosphate + UMP + 2 H(+). Its pathway is glycolipid biosynthesis; lipid IV(A) biosynthesis; lipid IV(A) from (3R)-3-hydroxytetradecanoyl-[acyl-carrier-protein] and UDP-N-acetyl-alpha-D-glucosamine: step 4/6. Hydrolyzes the pyrophosphate bond of UDP-2,3-diacylglucosamine to yield 2,3-diacylglucosamine 1-phosphate (lipid X) and UMP by catalyzing the attack of water at the alpha-P atom. Involved in the biosynthesis of lipid A, a phosphorylated glycolipid that anchors the lipopolysaccharide to the outer membrane of the cell. The sequence is that of UDP-2,3-diacylglucosamine hydrolase from Neisseria gonorrhoeae (strain ATCC 700825 / FA 1090).